A 119-amino-acid polypeptide reads, in one-letter code: Holo-[acyl-carrier-protein] synthase (119 aa).

Mg(2+) is bound by residues Asp-8 and Glu-58.

It belongs to the P-Pant transferase superfamily. AcpS family. The cofactor is Mg(2+).

It is found in the cytoplasm. It catalyses the reaction apo-[ACP] + CoA = holo-[ACP] + adenosine 3',5'-bisphosphate + H(+). In terms of biological role, transfers the 4'-phosphopantetheine moiety from coenzyme A to a Ser of acyl-carrier-protein. This Limosilactobacillus fermentum (strain NBRC 3956 / LMG 18251) (Lactobacillus fermentum) protein is Holo-[acyl-carrier-protein] synthase.